A 133-amino-acid chain; its full sequence is Small ribosomal subunit protein uS12c (133 aa).

The protein belongs to the universal ribosomal protein uS12 family. In terms of assembly, part of the 30S ribosomal subunit.

It is found in the plastid. The protein resides in the chloroplast. Its function is as follows. With S4 and S5 plays an important role in translational accuracy. Located at the interface of the 30S and 50S subunits. This Chlamydomonas reinhardtii (Chlamydomonas smithii) protein is Small ribosomal subunit protein uS12c (rps12).